Here is a 396-residue protein sequence, read N- to C-terminus: MFENITAAPADPILGLADLFRADDRPGKINLGIGVYKDETGKTPVLTSVKKAEQYLLENETTKNYLGIDGIPEFARCTQELLFGKGSALINDKRARTAQTPGGTGALRIAADFLAKNTPVKRVWVSNPSWPNHKSVFNAAGLEVREYAYYDAENHSLDFEALQASLSEAQAGDVVLFHGCCHNPTGIDPTLEQWQVLAELSVEKGWLPLFDFAYQGFARGLEEDAEGLRAFAALHKELIVASSYSKNFGLYNERVGACTLVAADAETVDRAFSQMKSAIRANYSNPPAHGASIVATILSNDALRAIWEQELTDMRQRIQRMRQLFVNTLQEKGANRDFSFIIKQNGMFSFSGLTKDQVLRLREEFGVYAVASGRVNVAGMTPDNMAPLCEAIVAVL.

Positions 34, 130, and 183 each coordinate L-aspartate. Lys-246 is modified (N6-(pyridoxal phosphate)lysine). Arg-374 serves as a coordination point for L-aspartate.

Belongs to the class-I pyridoxal-phosphate-dependent aminotransferase family. In terms of assembly, homodimer. It depends on pyridoxal 5'-phosphate as a cofactor.

The protein resides in the cytoplasm. The catalysed reaction is L-aspartate + 2-oxoglutarate = oxaloacetate + L-glutamate. The chain is Aspartate aminotransferase (aspC) from Salmonella typhi.